The sequence spans 160 residues: MRCPSCNSLDTQVKDSRPTEDSAVIRRRRVCMACNFRFTTFERVQLRELTVIKRNGRRVPFDRDKLVRSLQISLRKRPVEPERVETMVSAIVRELESGGEAEISSEIIGEIVMEHLRSLDDVAYVRFASVYRNFREAKDFEAVLGELSSEDDARPVPLRK.

Polar residues predominate over residues 1–11; that stretch reads MRCPSCNSLDT. The interval 1-20 is disordered; that stretch reads MRCPSCNSLDTQVKDSRPTE. A zinc finger spans residues 3 to 34; that stretch reads CPSCNSLDTQVKDSRPTEDSAVIRRRRVCMAC. The ATP-cone domain occupies 49-139; the sequence is LTVIKRNGRR…VYRNFREAKD (91 aa).

Belongs to the NrdR family. It depends on Zn(2+) as a cofactor.

In terms of biological role, negatively regulates transcription of bacterial ribonucleotide reductase nrd genes and operons by binding to NrdR-boxes. This Nitrobacter hamburgensis (strain DSM 10229 / NCIMB 13809 / X14) protein is Transcriptional repressor NrdR.